A 392-amino-acid polypeptide reads, in one-letter code: Formate-dependent phosphoribosylglycinamide formyltransferase (392 aa).

N(1)-(5-phospho-beta-D-ribosyl)glycinamide-binding positions include 22–23 (EL) and Glu-82. ATP contacts are provided by residues Arg-114, Lys-155, 160–165 (SSGKGQ), 195–198 (EGLV), and Glu-203. The region spanning 119–308 (RLAAETLSLP…EFALHVRAFL (190 aa)) is the ATP-grasp domain. Residues Glu-267 and Glu-279 each coordinate Mg(2+). N(1)-(5-phospho-beta-D-ribosyl)glycinamide contacts are provided by residues Asp-286, Lys-355, and 362–363 (RR).

This sequence belongs to the PurK/PurT family. In terms of assembly, homodimer.

The catalysed reaction is N(1)-(5-phospho-beta-D-ribosyl)glycinamide + formate + ATP = N(2)-formyl-N(1)-(5-phospho-beta-D-ribosyl)glycinamide + ADP + phosphate + H(+). It functions in the pathway purine metabolism; IMP biosynthesis via de novo pathway; N(2)-formyl-N(1)-(5-phospho-D-ribosyl)glycinamide from N(1)-(5-phospho-D-ribosyl)glycinamide (formate route): step 1/1. Involved in the de novo purine biosynthesis. Catalyzes the transfer of formate to 5-phospho-ribosyl-glycinamide (GAR), producing 5-phospho-ribosyl-N-formylglycinamide (FGAR). Formate is provided by PurU via hydrolysis of 10-formyl-tetrahydrofolate. The chain is Formate-dependent phosphoribosylglycinamide formyltransferase from Sodalis glossinidius (strain morsitans).